We begin with the raw amino-acid sequence, 293 residues long: Extracellular metalloprotease MGYG_00389 (293 aa).

A signal peptide spans 1-19 (MRFSVFLPAIAALSSAVAA). N-linked (GlcNAc...) asparagine glycans are attached at residues Asn-49 and Asn-53. His-184 lines the Zn(2+) pocket. The active site involves Glu-185. Residue His-188 coordinates Zn(2+). Cysteines 223 and 249 form a disulfide. The disordered stretch occupies residues 270–293 (GSGSGSVTRPRPKPPVLMDYEHRL).

It belongs to the peptidase M43B family.

It is found in the secreted. Secreted metalloproteinase that allows assimilation of proteinaceous substrates. Plays a pivotal role as a pathogenicity determinant during infections and contributes to the ability of the pathogen to persist within the mammalian host. This Arthroderma gypseum (strain ATCC MYA-4604 / CBS 118893) (Microsporum gypseum) protein is Extracellular metalloprotease MGYG_00389.